The following is a 345-amino-acid chain: Dihydroorotase (345 aa).

Zn(2+) is bound by residues H13 and H15. Substrate contacts are provided by residues 15-17 and N41; that span reads HLR. Residues K99, H136, and H174 each coordinate Zn(2+). N6-carboxylysine is present on K99. H136 contacts substrate. L219 contacts substrate. Residue D247 coordinates Zn(2+). The active site involves D247. H251 and A263 together coordinate substrate.

This sequence belongs to the metallo-dependent hydrolases superfamily. DHOase family. Class II DHOase subfamily. In terms of assembly, homodimer. Zn(2+) serves as cofactor.

It catalyses the reaction (S)-dihydroorotate + H2O = N-carbamoyl-L-aspartate + H(+). The protein operates within pyrimidine metabolism; UMP biosynthesis via de novo pathway; (S)-dihydroorotate from bicarbonate: step 3/3. Catalyzes the reversible cyclization of carbamoyl aspartate to dihydroorotate. The chain is Dihydroorotase from Acaryochloris marina (strain MBIC 11017).